A 349-amino-acid chain; its full sequence is NADH-quinone oxidoreductase subunit H (349 aa).

8 helical membrane-spanning segments follow: residues 11 to 31 (FPLLIIVGKTLLLLVILLLLV), 83 to 103 (GVFLLAPFVSATLALSTWAVI), 116 to 136 (VGLLYILAISSLEVYGVIMGG), 162 to 182 (IGFVLVTVILVSGSLDLTTIV), 200 to 220 (FLDWNWLVLFPMFIIFFISAL), 252 to 272 (LFFLGEYVAIVLMCALTTILF), 288 to 308 (VPGIIWFVLKVCFVFFWFAMV), and 323 to 343 (LGWKVFLPLSLAMVVITAAFL).

Belongs to the complex I subunit 1 family. In terms of assembly, NDH-1 is composed of 14 different subunits. Subunits NuoA, H, J, K, L, M, N constitute the membrane sector of the complex.

The protein localises to the cell inner membrane. It catalyses the reaction a quinone + NADH + 5 H(+)(in) = a quinol + NAD(+) + 4 H(+)(out). NDH-1 shuttles electrons from NADH, via FMN and iron-sulfur (Fe-S) centers, to quinones in the respiratory chain. The immediate electron acceptor for the enzyme in this species is believed to be ubiquinone. Couples the redox reaction to proton translocation (for every two electrons transferred, four hydrogen ions are translocated across the cytoplasmic membrane), and thus conserves the redox energy in a proton gradient. This subunit may bind ubiquinone. The polypeptide is NADH-quinone oxidoreductase subunit H (Bartonella henselae (strain ATCC 49882 / DSM 28221 / CCUG 30454 / Houston 1) (Rochalimaea henselae)).